A 446-amino-acid polypeptide reads, in one-letter code: Enolase 1 (446 aa).

His164 and Glu173 together coordinate substrate. Glu216 functions as the Proton donor in the catalytic mechanism. 3 residues coordinate Mg(2+): Asp251, Glu302, and Asp329. 2 residues coordinate substrate: Glu302 and Asp329. The active-site Proton acceptor is the Lys354. Substrate is bound by residues 381–384 and Lys405; that span reads SHRS.

Belongs to the enolase family. As to quaternary structure, homodimer. It depends on Mg(2+) as a cofactor.

Its subcellular location is the cytoplasm. It catalyses the reaction (2R)-2-phosphoglycerate = phosphoenolpyruvate + H2O. The protein operates within carbohydrate degradation; glycolysis; pyruvate from D-glyceraldehyde 3-phosphate: step 4/5. This chain is Enolase 1 (ENO1), found in Zea mays (Maize).